A 158-amino-acid chain; its full sequence is Crossover junction endodeoxyribonuclease RuvC (158 aa).

Residues Asp7, Glu66, and Asp139 contribute to the active site. Mg(2+)-binding residues include Asp7, Glu66, and Asp139.

The protein belongs to the RuvC family. As to quaternary structure, homodimer which binds Holliday junction (HJ) DNA. The HJ becomes 2-fold symmetrical on binding to RuvC with unstacked arms; it has a different conformation from HJ DNA in complex with RuvA. In the full resolvosome a probable DNA-RuvA(4)-RuvB(12)-RuvC(2) complex forms which resolves the HJ. Requires Mg(2+) as cofactor.

It localises to the cytoplasm. The enzyme catalyses Endonucleolytic cleavage at a junction such as a reciprocal single-stranded crossover between two homologous DNA duplexes (Holliday junction).. The RuvA-RuvB-RuvC complex processes Holliday junction (HJ) DNA during genetic recombination and DNA repair. Endonuclease that resolves HJ intermediates. Cleaves cruciform DNA by making single-stranded nicks across the HJ at symmetrical positions within the homologous arms, yielding a 5'-phosphate and a 3'-hydroxyl group; requires a central core of homology in the junction. The consensus cleavage sequence is 5'-(A/T)TT(C/G)-3'. Cleavage occurs on the 3'-side of the TT dinucleotide at the point of strand exchange. HJ branch migration catalyzed by RuvA-RuvB allows RuvC to scan DNA until it finds its consensus sequence, where it cleaves and resolves the cruciform DNA. This is Crossover junction endodeoxyribonuclease RuvC from Campylobacter lari (strain RM2100 / D67 / ATCC BAA-1060).